The chain runs to 443 residues: ATP-dependent protease ATPase subunit HslU (443 aa).

ATP is bound by residues Ile-20, Gly-62–Glu-67, Asp-255, Glu-321, and Arg-393.

Belongs to the ClpX chaperone family. HslU subfamily. As to quaternary structure, a double ring-shaped homohexamer of HslV is capped on each side by a ring-shaped HslU homohexamer. The assembly of the HslU/HslV complex is dependent on binding of ATP.

Its subcellular location is the cytoplasm. Functionally, ATPase subunit of a proteasome-like degradation complex; this subunit has chaperone activity. The binding of ATP and its subsequent hydrolysis by HslU are essential for unfolding of protein substrates subsequently hydrolyzed by HslV. HslU recognizes the N-terminal part of its protein substrates and unfolds these before they are guided to HslV for hydrolysis. The protein is ATP-dependent protease ATPase subunit HslU of Helicobacter acinonychis (strain Sheeba).